The sequence spans 356 residues: UDP-N-acetylglucosamine--N-acetylmuramyl-(pentapeptide) pyrophosphoryl-undecaprenol N-acetylglucosamine transferase (356 aa).

Residues 11–13, N123, R159, S187, I241, 260–265, and Q286 each bind UDP-N-acetyl-alpha-D-glucosamine; these read TGG and ALTVAE.

Belongs to the glycosyltransferase 28 family. MurG subfamily.

The protein localises to the cell inner membrane. It carries out the reaction di-trans,octa-cis-undecaprenyl diphospho-N-acetyl-alpha-D-muramoyl-L-alanyl-D-glutamyl-meso-2,6-diaminopimeloyl-D-alanyl-D-alanine + UDP-N-acetyl-alpha-D-glucosamine = di-trans,octa-cis-undecaprenyl diphospho-[N-acetyl-alpha-D-glucosaminyl-(1-&gt;4)]-N-acetyl-alpha-D-muramoyl-L-alanyl-D-glutamyl-meso-2,6-diaminopimeloyl-D-alanyl-D-alanine + UDP + H(+). Its pathway is cell wall biogenesis; peptidoglycan biosynthesis. Cell wall formation. Catalyzes the transfer of a GlcNAc subunit on undecaprenyl-pyrophosphoryl-MurNAc-pentapeptide (lipid intermediate I) to form undecaprenyl-pyrophosphoryl-MurNAc-(pentapeptide)GlcNAc (lipid intermediate II). The chain is UDP-N-acetylglucosamine--N-acetylmuramyl-(pentapeptide) pyrophosphoryl-undecaprenol N-acetylglucosamine transferase from Azoarcus sp. (strain BH72).